We begin with the raw amino-acid sequence, 547 residues long: Serine/threonine-protein kinase pkn3 (547 aa).

The Protein kinase domain occupies 18–288 (YRVEALIGEG…EAFKAELQAV (271 aa)). Residues 24-32 (IGEGGMGKV) and Lys-47 contribute to the ATP site. Catalysis depends on Asp-142, which acts as the Proton acceptor. Residues 290 to 299 (KERRRMDSAP) show a composition bias toward basic and acidic residues. The segment at 290–327 (KERRRMDSAPRRSANSSAVLAPLPRKSAASPQSDVRDA) is disordered.

This sequence belongs to the protein kinase superfamily. Ser/Thr protein kinase family.

The catalysed reaction is L-seryl-[protein] + ATP = O-phospho-L-seryl-[protein] + ADP + H(+). It carries out the reaction L-threonyl-[protein] + ATP = O-phospho-L-threonyl-[protein] + ADP + H(+). The polypeptide is Serine/threonine-protein kinase pkn3 (pkn3) (Myxococcus xanthus).